A 792-amino-acid polypeptide reads, in one-letter code: Ribonucleoside-diphosphate reductase large subunit (792 aa).

The ATP-cone domain maps to 1–92 (MHVIKRDGRQ…VSNLHKETKK (92 aa)). Residues 5–6 (KR), 11–17 (ERVMFDK), T53, and D57 each bind ATP. An N6-acetyllysine modification is found at K17. Residues S202 and S217 each coordinate GDP. Cysteines 218 and 444 form a disulfide. Residues 226-228 (DSI), K243, R256, and 263-264 (AG) contribute to the dTTP site. Position 376 is an N6-acetyllysine (K376). Residue N427 coordinates GDP. N427 functions as the Proton acceptor in the catalytic mechanism. The active-site Cysteine radical intermediate is the C429. GDP-binding positions include E431 and 604–607 (TAST). E431 serves as the catalytic Proton acceptor. Residue T751 is modified to Phosphothreonine.

Belongs to the ribonucleoside diphosphate reductase large chain family. Heterodimer of a large and a small subunit. Interacts with RRM2B. Interacts with AHCYL1 which inhibits its activity.

The protein resides in the cytoplasm. The enzyme catalyses a 2'-deoxyribonucleoside 5'-diphosphate + [thioredoxin]-disulfide + H2O = a ribonucleoside 5'-diphosphate + [thioredoxin]-dithiol. With respect to regulation, under complex allosteric control mediated by deoxynucleoside triphosphates and ATP binding to separate specificity and activation sites on the M1 subunit. The type of nucleotide bound at the specificity site determines substrate preference. It seems probable that ATP makes the enzyme reduce CDP and UDP, dGTP favors ADP reduction and dTTP favors GDP reduction. Stimulated by ATP and inhibited by dATP binding to the activity site, the dATP inhibition is mediated by AHCYL1 which stabilizes dATP in the site. Functionally, provides the precursors necessary for DNA synthesis. Catalyzes the biosynthesis of deoxyribonucleotides from the corresponding ribonucleotides. The sequence is that of Ribonucleoside-diphosphate reductase large subunit (Rrm1) from Mus musculus (Mouse).